A 152-amino-acid polypeptide reads, in one-letter code: D-aminoacyl-tRNA deacylase (152 aa).

The Gly-cisPro motif, important for rejection of L-amino acids signature appears at G138–P139.

The protein belongs to the DTD family. As to quaternary structure, homodimer.

Its subcellular location is the cytoplasm. The enzyme catalyses glycyl-tRNA(Ala) + H2O = tRNA(Ala) + glycine + H(+). The catalysed reaction is a D-aminoacyl-tRNA + H2O = a tRNA + a D-alpha-amino acid + H(+). An aminoacyl-tRNA editing enzyme that deacylates mischarged D-aminoacyl-tRNAs. Also deacylates mischarged glycyl-tRNA(Ala), protecting cells against glycine mischarging by AlaRS. Acts via tRNA-based rather than protein-based catalysis; rejects L-amino acids rather than detecting D-amino acids in the active site. By recycling D-aminoacyl-tRNA to D-amino acids and free tRNA molecules, this enzyme counteracts the toxicity associated with the formation of D-aminoacyl-tRNA entities in vivo and helps enforce protein L-homochirality. The protein is D-aminoacyl-tRNA deacylase of Chloroherpeton thalassium (strain ATCC 35110 / GB-78).